Here is a 537-residue protein sequence, read N- to C-terminus: Mitochondria-eating protein (537 aa).

An interaction with YWHAG/14-3-3 protein gamma region spans residues 1–273 (MADNLRRLVS…PCSRSHSRSR (273 aa)). Residues serine 85, serine 127, serine 154, and serine 157 each carry the phosphoserine modification. Positions 115 to 253 (GTRDIQQLDA…SAEKSVLQGR (139 aa)) form a coiled coil. Disordered stretches follow at residues 171–221 (QLKS…ANQR) and 249–293 (VLQG…AKLS). Over residues 179-217 (EESRHRNSDRRRSEKRGSERRRVELRGSEQRVSDLDRRS) the composition is skewed to basic and acidic residues. Residues 253–287 (RSARSRSPSPAPCSRSHSRSRSTSPSSAKARTPSP) are compositionally biased toward low complexity. Serine 286 and serine 508 each carry phosphoserine.

Belongs to the MIEAP family. As to quaternary structure, interacts (via coiled-coil domains) with BNIP3L (via BH3 domain). Interacts (via coiled-coil domains) with BNIP3 (via BH3 domain). Interacts with YWHAG/14-3-3 protein gamma; a protein that also plays a role in MALM.

Its subcellular location is the cytoplasm. It is found in the cytosol. The protein localises to the mitochondrion outer membrane. The protein resides in the mitochondrion matrix. In terms of biological role, key regulator of mitochondrial quality that mediates the repairing or degradation of unhealthy mitochondria in response to mitochondrial damage. Mediator of mitochondrial protein catabolic process (also named MALM) by mediating the degradation of damaged proteins inside mitochondria by promoting the accumulation in the mitochondrial matrix of hydrolases that are characteristic of the lysosomal lumen. Also involved in mitochondrion degradation of damaged mitochondria by promoting the formation of vacuole-like structures (named MIV), which engulf and degrade unhealthy mitochondria by accumulating lysosomes. The physical interaction of SPATA18/MIEAP, BNIP3 and BNIP3L/NIX at the mitochondrial outer membrane regulates the opening of a pore in the mitochondrial double membrane in order to mediate the translocation of lysosomal proteins from the cytoplasm to the mitochondrial matrix. Binds cardiolipin. May form molecular condensates (non-membrane-bounded organelles) within mitochondria that compartmentalize and promote cardiolipin metabolism. The sequence is that of Mitochondria-eating protein (SPATA18) from Bos taurus (Bovine).